The following is a 282-amino-acid chain: MMMGKEDLGLSLSLGFAQNHPLQLNLKPTSSPMSNLQMFPWNQTLVSSSDQQKQQFLRKIDVNSLPTTVDLEEETGVSSPNSTISSTVSGKRRSTEREGTSGGGCGDDLDITLDRSSSRGTSDEEEDYGGETCRKKLRLSKDQSAVLEDTFKEHNTLNPKQKLALAKKLGLTARQVEVWFQNRRARTKLKQTEVDCEYLKRCVEKLTEENRRLEKEAAELRALKLSPRLYGQMSPPTTLLMCPSCERVAGPSSSNHNQRSVSLSPWLQMAHGSTFDVMRPRS.

Residues 71-134 (LEEETGVSSP…EEDYGGETCR (64 aa)) form a disordered region. The segment covering 76 to 89 (GVSSPNSTISSTVS) has biased composition (low complexity). Positions 132-191 (TCRKKLRLSKDQSAVLEDTFKEHNTLNPKQKLALAKKLGLTARQVEVWFQNRRARTKLKQ) form a DNA-binding region, homeobox. Positions 199–220 (LKRCVEKLTEENRRLEKEAAEL) are leucine-zipper.

The protein belongs to the HD-ZIP homeobox family. Class II subfamily. Interacts with BZIP30.

The protein resides in the nucleus. Probable transcription factor. The sequence is that of Homeobox-leucine zipper protein HAT1 (HAT1) from Arabidopsis thaliana (Mouse-ear cress).